We begin with the raw amino-acid sequence, 72 residues long: Disintegrin crotatroxin (72 aa).

Positions 1–72 constitute a Disintegrin domain; that stretch reads AGEECDCGSP…ADCPRNGLYG (72 aa). 6 disulfide bridges follow: C5-C20, C7-C15, C14-C37, C28-C34, C33-C58, and C46-C65. Residues 50 to 52 carry the Cell attachment site motif; the sequence is RGD.

Belongs to the venom metalloproteinase (M12B) family. P-II subfamily. P-IIa sub-subfamily. In terms of assembly, monomer. Expressed by the venom gland.

It localises to the secreted. Its function is as follows. Inhibits fibrinogen interaction with platelets. Acts by binding to the alpha-IIb/beta-3 (ITGA2B/ITGB3) on the platelet surface and inhibits aggregation induced by ADP, thrombin, platelet-activating factor and collagen. Inhibits ADP-induced platelet aggregation (IC(50) = 17.5nM), cancer cell migration in vitro, and experimental lung tumor colonization of cancer cells. The polypeptide is Disintegrin crotatroxin (Crotalus atrox (Western diamondback rattlesnake)).